Here is a 505-residue protein sequence, read N- to C-terminus: Probable folylpolyglutamate synthase (505 aa).

89-92 (GKGS) lines the ATP pocket. Residues S121, E190, and H218 each coordinate Mg(2+). ATP is bound by residues R332 and D346.

It belongs to the folylpolyglutamate synthase family. Requires a monovalent cation as cofactor.

Its subcellular location is the mitochondrion inner membrane. It is found in the mitochondrion matrix. It localises to the cytoplasm. It carries out the reaction (6S)-5,6,7,8-tetrahydrofolyl-(gamma-L-Glu)(n) + L-glutamate + ATP = (6S)-5,6,7,8-tetrahydrofolyl-(gamma-L-Glu)(n+1) + ADP + phosphate + H(+). Its pathway is cofactor biosynthesis; tetrahydrofolylpolyglutamate biosynthesis. Functionally, catalyzes conversion of folates to polyglutamate derivatives allowing concentration of folate compounds in the cell and the intracellular retention of these cofactors, which are important substrates for most of the folate-dependent enzymes that are involved in one-carbon transfer reactions involved in purine, pyrimidine and amino acid synthesis. This is Probable folylpolyglutamate synthase (met7) from Schizosaccharomyces pombe (strain 972 / ATCC 24843) (Fission yeast).